Consider the following 684-residue polypeptide: Methionine--tRNA ligase (684 aa).

The short motif at 12–22 (PYANGSIHLGH) is the 'HIGH' region element. The Zn(2+) site is built by cysteine 143, cysteine 146, cysteine 156, and cysteine 159. Residues 339–343 (KMSKS) carry the 'KMSKS' region motif. An ATP-binding site is contributed by lysine 342. Positions 581–684 (DFMKIDMRVA…AGAQPGDKVG (104 aa)) constitute a tRNA-binding domain.

It belongs to the class-I aminoacyl-tRNA synthetase family. MetG type 1 subfamily. As to quaternary structure, homodimer. Zn(2+) is required as a cofactor.

The protein resides in the cytoplasm. It catalyses the reaction tRNA(Met) + L-methionine + ATP = L-methionyl-tRNA(Met) + AMP + diphosphate. In terms of biological role, is required not only for elongation of protein synthesis but also for the initiation of all mRNA translation through initiator tRNA(fMet) aminoacylation. The polypeptide is Methionine--tRNA ligase (Neisseria gonorrhoeae (strain ATCC 700825 / FA 1090)).